The primary structure comprises 101 residues: MMLEHVLVLSAYLFSIGIYGLITSRNMVRALMCLELILNAVNMNLVTFSDLFDSRQLKGDVFSIFVIAIAAAEAAIGPAIVSSIYRNRKSTRINQSNLLNK.

A run of 3 helical transmembrane segments spans residues 2-22, 32-52, and 61-81; these read MLEH…YGLI, MCLE…SDLF, and VFSI…PAIV.

The protein belongs to the complex I subunit 4L family. As to quaternary structure, NDH is composed of at least 16 different subunits, 5 of which are encoded in the nucleus.

The protein resides in the plastid. It localises to the chloroplast thylakoid membrane. It carries out the reaction a plastoquinone + NADH + (n+1) H(+)(in) = a plastoquinol + NAD(+) + n H(+)(out). The catalysed reaction is a plastoquinone + NADPH + (n+1) H(+)(in) = a plastoquinol + NADP(+) + n H(+)(out). Functionally, NDH shuttles electrons from NAD(P)H:plastoquinone, via FMN and iron-sulfur (Fe-S) centers, to quinones in the photosynthetic chain and possibly in a chloroplast respiratory chain. The immediate electron acceptor for the enzyme in this species is believed to be plastoquinone. Couples the redox reaction to proton translocation, and thus conserves the redox energy in a proton gradient. This is NAD(P)H-quinone oxidoreductase subunit 4L, chloroplastic from Nuphar advena (Common spatterdock).